The following is a 113-amino-acid chain: uncharacterized protein (113 aa).

This is an uncharacterized protein from Listeria innocua serovar 6a (strain ATCC BAA-680 / CLIP 11262).